The chain runs to 427 residues: 3-phosphoshikimate 1-carboxyvinyltransferase (427 aa).

The 3-phosphoshikimate site is built by Lys22, Ser23, and Arg27. Position 22 (Lys22) interacts with phosphoenolpyruvate. Positions 96 and 124 each coordinate phosphoenolpyruvate. 3-phosphoshikimate contacts are provided by Ser169, Ser170, Gln171, Ser197, Asp313, Asn336, and Lys340. Phosphoenolpyruvate is bound at residue Gln171. Catalysis depends on Asp313, which acts as the Proton acceptor. The phosphoenolpyruvate site is built by Arg344, Arg386, and Lys411.

This sequence belongs to the EPSP synthase family. As to quaternary structure, monomer.

It localises to the cytoplasm. The catalysed reaction is 3-phosphoshikimate + phosphoenolpyruvate = 5-O-(1-carboxyvinyl)-3-phosphoshikimate + phosphate. Its pathway is metabolic intermediate biosynthesis; chorismate biosynthesis; chorismate from D-erythrose 4-phosphate and phosphoenolpyruvate: step 6/7. Catalyzes the transfer of the enolpyruvyl moiety of phosphoenolpyruvate (PEP) to the 5-hydroxyl of shikimate-3-phosphate (S3P) to produce enolpyruvyl shikimate-3-phosphate and inorganic phosphate. This is 3-phosphoshikimate 1-carboxyvinyltransferase from Escherichia coli O127:H6 (strain E2348/69 / EPEC).